A 60-amino-acid chain; its full sequence is uncharacterized protein (60 aa).

The N-terminal stretch at 1–21 (MNKLLKLFFITIIIYNNIAFA) is a signal peptide.

This is an uncharacterized protein from Rickettsia prowazekii (strain Madrid E).